Here is a 404-residue protein sequence, read N- to C-terminus: Probable ribosomal oxygenase HI_0396 (404 aa).

Residues 102-231 enclose the JmjC domain; sequence ELGQLWNKFG…LIDGISKGFC (130 aa). Positions 135, 137, and 199 each coordinate Fe cation.

This sequence belongs to the ROX family. The cofactor is Fe(2+).

Its function is as follows. Oxygenase that catalyzes the hydroxylation of a ribosomal protein. The sequence is that of Probable ribosomal oxygenase HI_0396 from Haemophilus influenzae (strain ATCC 51907 / DSM 11121 / KW20 / Rd).